Reading from the N-terminus, the 322-residue chain is Cytochrome c biogenesis protein CcsA (322 aa).

7 helical membrane-spanning segments follow: residues Leu2 to Ile22, Gly44 to Gly64, Leu68 to Ile88, Met143 to Ile163, Val226 to Asn246, Thr260 to His274, and Val289 to Ile309.

This sequence belongs to the CcmF/CycK/Ccl1/NrfE/CcsA family. As to quaternary structure, may interact with Ccs1.

The protein resides in the plastid. It localises to the chloroplast thylakoid membrane. Its function is as follows. Required during biogenesis of c-type cytochromes (cytochrome c6 and cytochrome f) at the step of heme attachment. The protein is Cytochrome c biogenesis protein CcsA of Brachypodium distachyon (Purple false brome).